The sequence spans 476 residues: MGKTLYQNKTLYQKLYDAHIVYEAPNETPLLYIDRHLVHEVTSPQAFDGLRAMGRPVRQPGKTFATMDHNVSTQTKDINASGEMARIQMQELIKNCAEFGVSLYDLNHPFQGIVHVIGPEQGMTLPGMTIVCGDSHTATHGAFGSLAFGIGTSEVEHVLATQTLKQGRAKTMKIEVNGEVGPGITAKDIVLAIIGKTGSAGGTGHVVEFCGSAIEALSMEGRMTLCNMAIEMGAKAGLVAPDDTTFNYLKGRQFAPTGEQWEQGVAYWRTLKSDADAKFDTVVTLDAADIAPQVTWGTNPGQVIAVNQIIPAPESFSDPVERASAEKALAYMDLRPGIKLTEVAIDKVFIGSCTNSRIEDLRAAAAVAQGRKVASGVQAIVVPGSGPVKAQAEAEGLDKIFIEAGFEWRLPGCSMCLAMNNDRLEPGERCASTSNRNFEGRQGRGGRTHLVSPAMAAAAAVSGHFADVRDLSAATH.

[4Fe-4S] cluster is bound by residues C353, C413, and C416.

The protein belongs to the aconitase/IPM isomerase family. LeuC type 1 subfamily. As to quaternary structure, heterodimer of LeuC and LeuD. [4Fe-4S] cluster serves as cofactor.

The catalysed reaction is (2R,3S)-3-isopropylmalate = (2S)-2-isopropylmalate. Its pathway is amino-acid biosynthesis; L-leucine biosynthesis; L-leucine from 3-methyl-2-oxobutanoate: step 2/4. In terms of biological role, catalyzes the isomerization between 2-isopropylmalate and 3-isopropylmalate, via the formation of 2-isopropylmaleate. This is 3-isopropylmalate dehydratase large subunit from Yersinia enterocolitica serotype O:8 / biotype 1B (strain NCTC 13174 / 8081).